A 210-amino-acid chain; its full sequence is Type III pantothenate kinase (210 aa).

5-12 serves as a coordination point for ATP; that stretch reads DIGNTYLH. Residues Y69 and 73–76 each bind substrate; that span reads GVDR. D75 (proton acceptor) is an active-site residue. Residue D90 participates in K(+) binding. S93 contributes to the ATP binding site. Residue T145 coordinates substrate.

It belongs to the type III pantothenate kinase family. As to quaternary structure, homodimer. Requires NH4(+) as cofactor. K(+) is required as a cofactor.

Its subcellular location is the cytoplasm. It carries out the reaction (R)-pantothenate + ATP = (R)-4'-phosphopantothenate + ADP + H(+). It functions in the pathway cofactor biosynthesis; coenzyme A biosynthesis; CoA from (R)-pantothenate: step 1/5. In terms of biological role, catalyzes the phosphorylation of pantothenate (Pan), the first step in CoA biosynthesis. The polypeptide is Type III pantothenate kinase (Wolinella succinogenes (strain ATCC 29543 / DSM 1740 / CCUG 13145 / JCM 31913 / LMG 7466 / NCTC 11488 / FDC 602W) (Vibrio succinogenes)).